The following is a 317-amino-acid chain: GPI-specific phospholipase A2-like PGAP3 (317 aa).

Residues 1–18 (MAPFLVLFLAGVVSASRG) form the signal peptide. Residues 19-93 (DREPVYRDCV…QFHGKWPFSR (75 aa)) are Lumenal-facing. An N-linked (GlcNAc...) asparagine glycan is attached at Asn-35. A helical transmembrane segment spans residues 94–114 (FLFFQEPASALASFLNGVASL). At 115-132 (LMLFRYRSSVPSSCQMYR) the chain is on the cytoplasmic side. The chain crosses the membrane as a helical span at residues 133–153 (TCLAFSMVSVNAWFWSTIFHT). The Lumenal segment spans residues 154–163 (RDTALTEKMD). A helical membrane pass occupies residues 164–180 (YFCASSVILHSIYLCCM). Residues 181-189 (RTFGLQYPS) lie on the Cytoplasmic side of the membrane. The helical transmembrane segment at 190–210 (IANAFGAFLVLLFACHISYLT) threads the bilayer. The Lumenal portion of the chain corresponds to 211–219 (LGRFDYSYN). Residues 220–240 (MAANTSFGIVNLMWWLAWCMW) form a helical membrane-spanning segment. Residues 241–251 (RRFHQPYLWKC) are Cytoplasmic-facing. Residues 252 to 272 (VLVVVLLQSLALLELLDFPPV) traverse the membrane as a helical segment. A topological domain (lumenal) is located at residue Met-273. The helical transmembrane segment at 274-293 (WILDAHALWHFSTIPLHFLF) threads the bilayer. Topologically, residues 294-317 (YSFLRDDSLYLLKVNHDDDIPKLD) are cytoplasmic.

The protein belongs to the PGAP3 family.

Its subcellular location is the golgi apparatus membrane. Functionally, involved in the fatty acid remodeling steps of GPI-anchor maturation where the unsaturated acyl chain at sn-2 of inositol phosphate is replaced by a saturated stearoyl chain. May catalyze the first step of the fatty acid remodeling, by removing the unsaturated acyl chain at sn-2 of inositol phosphate, generating a lyso-GPI intermediate. The fatty acid remodeling steps is critical for the integration of GPI-APs into lipid rafts. This chain is GPI-specific phospholipase A2-like PGAP3, found in Xenopus laevis (African clawed frog).